Consider the following 569-residue polypeptide: Urease subunit alpha (569 aa).

In terms of domain architecture, Urease spans 132–569 (GGVDTHIHFI…VPLGQRYFLF (438 aa)). Ni(2+) contacts are provided by histidine 137, histidine 139, and lysine 220. Lysine 220 bears the N6-carboxylysine mark. Histidine 222 is a substrate binding site. Residues histidine 249 and histidine 275 each contribute to the Ni(2+) site. Residue histidine 323 is the Proton donor of the active site. Residue aspartate 363 coordinates Ni(2+).

This sequence belongs to the metallo-dependent hydrolases superfamily. Urease alpha subunit family. In terms of assembly, heterotrimer of UreA (gamma), UreB (beta) and UreC (alpha) subunits. Three heterotrimers associate to form the active enzyme. Ni cation serves as cofactor. Carboxylation allows a single lysine to coordinate two nickel ions.

It localises to the cytoplasm. It carries out the reaction urea + 2 H2O + H(+) = hydrogencarbonate + 2 NH4(+). It participates in nitrogen metabolism; urea degradation; CO(2) and NH(3) from urea (urease route): step 1/1. The polypeptide is Urease subunit alpha (Bacillus subtilis (strain 168)).